Consider the following 313-residue polypeptide: MVRGDDQLNGLQGGKRALDILCVATERTVSAFAYEEIGETSTEGDKRRERLRRLRRLINYSLSTTMNSSLSKRLKIDECKNQDPEQNPNRVASSPSSCHLESKRPQKVVSNKPVRNRKPVIVTDEDRTPTEWLIDVMREVNGMDAKLIFVKVLPNSDVDELQTRLMMPWKQILDMDFLNEEELEKIDRHHKKISASDKGADVIVVNSKGLQRKLKLKRWDMTSTSNYVLGLGWNKVVTDNILQRGTRLRIWSFHSPDMLFFAFVLSDPDPAPTECLNLLAKLCEETTCLEALQEANRMSSLVSDTELDLELRL.

Residues 80 to 110 (KNQDPEQNPNRVASSPSSCHLESKRPQKVVS) form a disordered region. Positions 84–99 (PEQNPNRVASSPSSCH) are enriched in polar residues. The TF-B3 DNA-binding region spans 169–267 (WKQILDMDFL…MLFFAFVLSD (99 aa)).

The protein localises to the nucleus. The protein is B3 domain-containing protein At2g31720 (ARF70) of Arabidopsis thaliana (Mouse-ear cress).